Consider the following 520-residue polypeptide: Laccase (520 aa).

A signal peptide spans Met-1–Ala-21. Plastocyanin-like domains follow at residues Ser-22 to Tyr-148 and Val-160 to Tyr-304. N-linked (GlcNAc...) asparagine glycosylation is present at Asn-75. The Cu cation site is built by His-85, His-87, His-130, and His-132. Intrachain disulfides connect Cys-106/Cys-509 and Cys-138/Cys-227. 2 N-linked (GlcNAc...) asparagine glycosylation sites follow: Asn-352 and Asn-402. The 124-residue stretch at Thr-373–Ala-496 folds into the Plastocyanin-like 3 domain. Residues His-418, His-421, His-423, His-473, Cys-474, His-475, and His-479 each contribute to the Cu cation site.

The protein belongs to the multicopper oxidase family. Requires Cu cation as cofactor.

The protein localises to the secreted. It carries out the reaction 4 hydroquinone + O2 = 4 benzosemiquinone + 2 H2O. In terms of biological role, lignin degradation and detoxification of lignin-derived products. This is Laccase (LAC) from Phlebia radiata (White-rot fungus).